Consider the following 776-residue polypeptide: Probable E3 ubiquitin-protein ligase HECTD2 (776 aa).

The tract at residues 1–46 (MSEAVRVPSPATPLVVAAAAPEERKGKESEREKLPPIVSAGAGATA) is disordered. The span at 7–20 (VPSPATPLVVAAAA) shows a compositional bias: low complexity. Phosphoserine is present on Ser-9. Residues 21 to 34 (PEERKGKESEREKL) show a composition bias toward basic and acidic residues. One can recognise an HECT domain in the interval 437 to 776 (KRADLKKKLK…ISNSEGFGLE (340 aa)). The active-site Glycyl thioester intermediate is the Cys-744.

The enzyme catalyses S-ubiquitinyl-[E2 ubiquitin-conjugating enzyme]-L-cysteine + [acceptor protein]-L-lysine = [E2 ubiquitin-conjugating enzyme]-L-cysteine + N(6)-ubiquitinyl-[acceptor protein]-L-lysine.. It functions in the pathway protein modification; protein ubiquitination. E3 ubiquitin-protein ligase which accepts ubiquitin from an E2 ubiquitin-conjugating enzyme in the form of a thioester and then directly transfers the ubiquitin to targeted substrates. The sequence is that of Probable E3 ubiquitin-protein ligase HECTD2 (HECTD2) from Pongo abelii (Sumatran orangutan).